The chain runs to 768 residues: 5-methyltetrahydropteroyltriglutamate--homocysteine methyltransferase (768 aa).

5-methyltetrahydropteroyltri-L-glutamate is bound by residues 17–20 (REWK) and Lys-113. L-homocysteine is bound by residues 440-442 (IGS) and Glu-493. Residues 440 to 442 (IGS) and Glu-493 contribute to the L-methionine site. Trp-570 contacts 5-methyltetrahydropteroyltri-L-glutamate. Asp-608 contacts L-homocysteine. Asp-608 contributes to the L-methionine binding site. Residue Glu-614 participates in 5-methyltetrahydropteroyltri-L-glutamate binding. Zn(2+) is bound by residues His-650, Cys-652, and Glu-674. The active-site Proton donor is His-703. Cys-735 is a binding site for Zn(2+).

This sequence belongs to the vitamin-B12 independent methionine synthase family. Zn(2+) is required as a cofactor.

The enzyme catalyses 5-methyltetrahydropteroyltri-L-glutamate + L-homocysteine = tetrahydropteroyltri-L-glutamate + L-methionine. It functions in the pathway amino-acid biosynthesis; L-methionine biosynthesis via de novo pathway; L-methionine from L-homocysteine (MetE route): step 1/1. Functionally, catalyzes the transfer of a methyl group from 5-methyltetrahydrofolate to homocysteine resulting in methionine formation. The protein is 5-methyltetrahydropteroyltriglutamate--homocysteine methyltransferase of Lactiplantibacillus plantarum (strain ATCC BAA-793 / NCIMB 8826 / WCFS1) (Lactobacillus plantarum).